A 142-amino-acid chain; its full sequence is Large ribosomal subunit protein uL13 (142 aa).

Belongs to the universal ribosomal protein uL13 family. In terms of assembly, part of the 50S ribosomal subunit.

Its function is as follows. This protein is one of the early assembly proteins of the 50S ribosomal subunit, although it is not seen to bind rRNA by itself. It is important during the early stages of 50S assembly. The protein is Large ribosomal subunit protein uL13 of Vibrio campbellii (strain ATCC BAA-1116).